The following is a 254-amino-acid chain: CDP-diacylglycerol pyrophosphatase (254 aa).

A helical membrane pass occupies residues 6–26 (YFLLALLVAILAALAGGYYWL).

It belongs to the Cdh family.

It is found in the cell inner membrane. The enzyme catalyses a CDP-1,2-diacyl-sn-glycerol + H2O = a 1,2-diacyl-sn-glycero-3-phosphate + CMP + 2 H(+). The protein operates within phospholipid metabolism; CDP-diacylglycerol degradation; phosphatidate from CDP-diacylglycerol: step 1/1. The protein is CDP-diacylglycerol pyrophosphatase of Klebsiella pneumoniae (strain 342).